Reading from the N-terminus, the 266-residue chain is NADP-dependent mannitol dehydrogenase (266 aa).

NADP(+) is bound by residues Ser53, Asn107, and Lys140. Ser159 (proton donor) is an active-site residue. Residues Tyr174, Lys178, Ile206, and Thr208 each contribute to the NADP(+) site. Tyr174 (proton acceptor) is an active-site residue. Residue Lys178 is the Lowers pKa of active site Tyr of the active site.

This sequence belongs to the short-chain dehydrogenases/reductases (SDR) family. Homotetramer.

It carries out the reaction D-mannitol + NADP(+) = D-fructose + NADPH + H(+). Functionally, D-mannitol 2-dehydrogenase which is not necessary for D-mannitol catabolism. D-mannitol metabolism occurs via at least two different routes involving mannitol dehydrogenase (MDH) or mannitol 1-phosphate dehydrogenase, and the exact physiological role of mannitol dehydrogenases remains unclear. This Hypocrea jecorina (strain ATCC 56765 / BCRC 32924 / NRRL 11460 / Rut C-30) (Trichoderma reesei) protein is NADP-dependent mannitol dehydrogenase.